Consider the following 601-residue polypeptide: Putative pentatricopeptide repeat-containing protein At3g25060, mitochondrial (601 aa).

Residues 1-80 constitute a mitochondrion transit peptide; sequence MVQTKHFCML…KVFDELPQRG (80 aa). PPR repeat units lie at residues 49–79, 80–114, 115–149, 150–180, 181–215, 216–250, 251–281, 282–316, 317–347, 351–381, 382–416, 417–452, and 453–487; these read GSSI…LPQR, GVSV…KIQP, DSST…GYKN, DVFV…MAKR, DVIC…GFGR, DRVV…GLPM, NVVV…MMFK, TAVS…GFQP, DLVT…ILKR, DRVT…VGRK, DLVC…NIEP, DHAT…KIQP, and SEKH…NALP. Residues 488–563 form a type E motif region; that stretch reads IWVALLSGCI…VPGYSAIEVN (76 aa). The tract at residues 564 to 594 is type E(+) motif; the sequence is GELRTFLMEDLSHHEHYHMLQVLRNLKTEIR.

This sequence belongs to the PPR family. PCMP-E subfamily.

It is found in the mitochondrion. This is Putative pentatricopeptide repeat-containing protein At3g25060, mitochondrial (PCMP-E96) from Arabidopsis thaliana (Mouse-ear cress).